The following is a 258-amino-acid chain: Shikimate dehydrogenase (NADP(+)) (258 aa).

Shikimate contacts are provided by residues 14–16 (SES) and threonine 61. The active-site Proton acceptor is lysine 65. Asparagine 86 and aspartate 101 together coordinate shikimate. NADP(+)-binding positions include 125–129 (GSGGS) and leucine 211. Tyrosine 213 provides a ligand contact to shikimate. Glycine 234 lines the NADP(+) pocket.

This sequence belongs to the shikimate dehydrogenase family. In terms of assembly, homodimer.

It catalyses the reaction shikimate + NADP(+) = 3-dehydroshikimate + NADPH + H(+). Its pathway is metabolic intermediate biosynthesis; chorismate biosynthesis; chorismate from D-erythrose 4-phosphate and phosphoenolpyruvate: step 4/7. In terms of biological role, involved in the biosynthesis of the chorismate, which leads to the biosynthesis of aromatic amino acids. Catalyzes the reversible NADPH linked reduction of 3-dehydroshikimate (DHSA) to yield shikimate (SA). In Clostridium botulinum (strain 657 / Type Ba4), this protein is Shikimate dehydrogenase (NADP(+)).